A 1070-amino-acid polypeptide reads, in one-letter code: DNA-directed RNA polymerase subunit beta (1070 aa).

It belongs to the RNA polymerase beta chain family. In plastids the minimal PEP RNA polymerase catalytic core is composed of four subunits: alpha, beta, beta', and beta''. When a (nuclear-encoded) sigma factor is associated with the core the holoenzyme is formed, which can initiate transcription.

It is found in the plastid. The protein localises to the chloroplast. It catalyses the reaction RNA(n) + a ribonucleoside 5'-triphosphate = RNA(n+1) + diphosphate. DNA-dependent RNA polymerase catalyzes the transcription of DNA into RNA using the four ribonucleoside triphosphates as substrates. The chain is DNA-directed RNA polymerase subunit beta from Lotus japonicus (Lotus corniculatus var. japonicus).